The following is a 257-amino-acid chain: tRNA (guanine-N(7)-)-methyltransferase (257 aa).

The interval 1–42 (MTVVVSDHQNPRPPGDDAAPLGRTGNRDRPPGSFFGRRKGHR) is disordered. S-adenosyl-L-methionine contacts are provided by Glu84, Glu109, Asp136, and Asp158. The active site involves Asp158. 2 residues coordinate substrate: Lys162 and Asp194.

The protein belongs to the class I-like SAM-binding methyltransferase superfamily. TrmB family.

The catalysed reaction is guanosine(46) in tRNA + S-adenosyl-L-methionine = N(7)-methylguanosine(46) in tRNA + S-adenosyl-L-homocysteine. The protein operates within tRNA modification; N(7)-methylguanine-tRNA biosynthesis. In terms of biological role, catalyzes the formation of N(7)-methylguanine at position 46 (m7G46) in tRNA. In Nitrobacter winogradskyi (strain ATCC 25391 / DSM 10237 / CIP 104748 / NCIMB 11846 / Nb-255), this protein is tRNA (guanine-N(7)-)-methyltransferase.